An 866-amino-acid chain; its full sequence is MTTMIGQTRQAGSSSYEQAWQAEQAPCPGMEPDTLTVGVVVVTRNPTFFQTGLSVLNDIRDYVFNRVHIQSELPLKLSELASDPLYSEAREKAIHFLKNQSKALNIQVIQCASLAEATGKIIYTHALEQQPEFQMGMLFYDQTSLGNVDDSIEKIDRDLDAFYSAMQRGGIPAFYTTFSTVTFIRDVRSSFRYLPQQYREIVRSEDPAIFQTELLCLWMDFFEMNYTNRRVKPIGALALHNTLAEQLIQFFERTAASRWLVSYYTGSIISNLIGYLDRHAEAHGALVLRGPNEHAIACGAMANWQLYRMPFLGVVTSGMMDEFKGTLINLKETAAQGIIVAAENRNNQWYSFQGTQTPTEDMRDVLAAKRIPYVYIDDVDGIADGLAEVFRLYHQAQGPVVILATQNVLESTLSLEPVPGDLPPVSGLPAYDCPPISDSFEQAMALINEGPEKLVWQLGPVSDDEYALVHEIADAAGLALVDSLAHPGSAPKYYQGKRNPHYLGTLAIYGYSPRVYNFLHTNDKLNPMSDQSVFMIKSRVAQITTPFSDGRLERKVHLVQLTHDERHLSPYADLKLHMDCLTFLRAVKANLHVDAALREKRKALIAAYLDSPSDVVSQLPSLPMSANYFFCQLNRVIENLIKTENFDFTGVYDVGRCGISAVRNVAKTRRGFSGWYGRALMGDALLATSYLAHTSPTHVVAFIGDGAKGIVPDILPAFIDNILTHPQLLNKSITIFYFCNGGLSVINTYQERILFNRTSRQMRLVNVDQPAFEQTVDDFHIQGKTLTHFDEDTIRHALMTPKRLNLFSVVLGHNNEGDGISLATAKGWQRDPSDREALQERKDWAARQPESTSTSFDQGQNKEAIS.

A disordered region spans residues 826–866 (KGWQRDPSDREALQERKDWAARQPESTSTSFDQGQNKEAIS). The segment covering 828–845 (WQRDPSDREALQERKDWA) has biased composition (basic and acidic residues). The segment covering 849–866 (PESTSTSFDQGQNKEAIS) has biased composition (polar residues).

It belongs to the TPP enzyme family. Thiamine diphosphate serves as cofactor.

It carries out the reaction (2E)-octenal + pyruvate + H(+) = (S)-3-acetyloctanal + CO2. It participates in antibiotic biosynthesis; prodigiosin biosynthesis. Involved in the biosynthesis of 2-methyl-3-n-amyl-pyrrole (MAP), one of the terminal products involved in the biosynthesis of the red antibiotic prodigiosin (Pig). Catalyzes the decarboxylation of pyruvate, followed by the modification of the resulting two-carbon fragment acetaldehyde at the C3 position of the 2-octenal (1,2-addition of acetaldehyde) giving 3-acetyloctanal. This chain is Thiamine diphosphate dependent-3-acetyloctanal synthase PigD, found in Serratia sp. (strain ATCC 39006) (Prodigiosinella confusarubida).